A 325-amino-acid chain; its full sequence is Cytochrome f (325 aa).

Positions methionine 1–alanine 40 are cleaved as a signal peptide. Tyrosine 41, cysteine 62, cysteine 65, and histidine 66 together coordinate heme. A helical membrane pass occupies residues isoleucine 290–leucine 309.

The protein belongs to the cytochrome f family. In terms of assembly, the 4 large subunits of the cytochrome b6-f complex are cytochrome b6, subunit IV (17 kDa polypeptide, PetD), cytochrome f and the Rieske protein, while the 4 small subunits are PetG, PetL, PetM and PetN. The complex functions as a dimer. The cofactor is heme.

It localises to the cellular thylakoid membrane. Component of the cytochrome b6-f complex, which mediates electron transfer between photosystem II (PSII) and photosystem I (PSI), cyclic electron flow around PSI, and state transitions. This Picosynechococcus sp. (strain ATCC 27264 / PCC 7002 / PR-6) (Agmenellum quadruplicatum) protein is Cytochrome f (petA).